The sequence spans 69 residues: Large ribosomal subunit protein uL29 (69 aa).

The protein belongs to the universal ribosomal protein uL29 family.

In Lactococcus lactis subsp. lactis (strain IL1403) (Streptococcus lactis), this protein is Large ribosomal subunit protein uL29 (rpmC).